A 211-amino-acid chain; its full sequence is Small ribosomal subunit protein uS3 (211 aa).

The region spanning leucine 38 to arginine 106 is the KH type-2 domain.

The protein belongs to the universal ribosomal protein uS3 family. In terms of assembly, part of the 30S ribosomal subunit. Forms a tight complex with proteins S10 and S14.

Binds the lower part of the 30S subunit head. Binds mRNA in the 70S ribosome, positioning it for translation. The sequence is that of Small ribosomal subunit protein uS3 from Geobacter sp. (strain M21).